A 337-amino-acid chain; its full sequence is Ketol-acid reductoisomerase (NADP(+)) (337 aa).

A KARI N-terminal Rossmann domain is found at 3 to 183 (IELFYDADAD…GGGRAGIIPT (181 aa)). NADP(+)-binding positions include 26–29 (YGSQ), R49, S52, S54, and 84–87 (DTSQ). Residue H109 is part of the active site. G135 contacts NADP(+). The 146-residue stretch at 184–329 (TFEAETVTDL…AKLRDLMSWV (146 aa)) folds into the KARI C-terminal knotted domain. Residues D192, E196, E228, and E232 each coordinate Mg(2+). S253 is a substrate binding site.

The protein belongs to the ketol-acid reductoisomerase family. It depends on Mg(2+) as a cofactor.

It carries out the reaction (2R)-2,3-dihydroxy-3-methylbutanoate + NADP(+) = (2S)-2-acetolactate + NADPH + H(+). It catalyses the reaction (2R,3R)-2,3-dihydroxy-3-methylpentanoate + NADP(+) = (S)-2-ethyl-2-hydroxy-3-oxobutanoate + NADPH + H(+). Its pathway is amino-acid biosynthesis; L-isoleucine biosynthesis; L-isoleucine from 2-oxobutanoate: step 2/4. The protein operates within amino-acid biosynthesis; L-valine biosynthesis; L-valine from pyruvate: step 2/4. In terms of biological role, involved in the biosynthesis of branched-chain amino acids (BCAA). Catalyzes an alkyl-migration followed by a ketol-acid reduction of (S)-2-acetolactate (S2AL) to yield (R)-2,3-dihydroxy-isovalerate. In the isomerase reaction, S2AL is rearranged via a Mg-dependent methyl migration to produce 3-hydroxy-3-methyl-2-ketobutyrate (HMKB). In the reductase reaction, this 2-ketoacid undergoes a metal-dependent reduction by NADPH to yield (R)-2,3-dihydroxy-isovalerate. The protein is Ketol-acid reductoisomerase (NADP(+)) of Corynebacterium efficiens (strain DSM 44549 / YS-314 / AJ 12310 / JCM 11189 / NBRC 100395).